A 591-amino-acid polypeptide reads, in one-letter code: Probable translation initiation factor IF-2 (591 aa).

Residues Ile-6–Met-220 enclose the tr-type G domain. The segment at Gly-15–Thr-22 is G1. Gly-15–Thr-22 contacts GTP. Positions Ala-40–His-44 are G2. Residues Asp-76–Gly-79 form a G3 region. GTP-binding positions include Asp-76 to His-80 and Thr-130 to Asp-133. Positions Thr-130–Asp-133 are G4. The segment at Ser-198–His-200 is G5.

The protein belongs to the TRAFAC class translation factor GTPase superfamily. Classic translation factor GTPase family. IF-2 subfamily.

Functionally, function in general translation initiation by promoting the binding of the formylmethionine-tRNA to ribosomes. Seems to function along with eIF-2. The polypeptide is Probable translation initiation factor IF-2 (Methanoregula boonei (strain DSM 21154 / JCM 14090 / 6A8)).